The following is a 249-amino-acid chain: tRNA pseudouridine synthase A (249 aa).

Residue Asp52 is the Nucleophile of the active site. Tyr111 provides a ligand contact to substrate.

This sequence belongs to the tRNA pseudouridine synthase TruA family. As to quaternary structure, homodimer.

It catalyses the reaction uridine(38/39/40) in tRNA = pseudouridine(38/39/40) in tRNA. Its function is as follows. Formation of pseudouridine at positions 38, 39 and 40 in the anticodon stem and loop of transfer RNAs. In Maricaulis maris (strain MCS10) (Caulobacter maris), this protein is tRNA pseudouridine synthase A.